The chain runs to 158 residues: Tryptophan-rich sensory protein (158 aa).

The next 5 membrane-spanning stretches (helical) occupy residues 5–25 (WALFLTFLAACGAPATTGALL), 44–65 (WVFPLAWTSLYFLMSLAAMRVA), 73–93 (ALAFYAAQLAFNTLWTPVFFG), 97–119 (MATALAVVMVMWLFVAATMWAFF), and 124–144 (WAGVLFVPYLIWATAATGLNF).

It belongs to the TspO/BZRP family. Homodimer.

It is found in the membrane. The protein resides in the cell inner membrane. In terms of biological role, may play a role in the transmembrane transport of tetrapyrroles and similar compounds, and thereby contribute to the regulation of tetrapyrrole biosynthesis. Binds tetrapyrroles and promotes the photooxidative degradation of protoporphyrin IX. Binds protoporphyrin IX, hemin, and coproporphyrin III, but does not bind delta-aminolevulinic acid. Can bind bilirubin, curcumin, gossypol, retinoic acid, cholesterol and the benzodiazepine receptor agonist PK-11195 (in vitro). Plays a role in the response to low oxygen levels and in the regulation of the biosynthesis of photosynthetic pigments. This chain is Tryptophan-rich sensory protein, found in Cereibacter sphaeroides (Rhodobacter sphaeroides).